The following is a 73-amino-acid chain: Serine rich endogenous peptide 1 (73 aa).

An N-terminal signal peptide occupies residues 1–28 (MGMSGSSGLVHVLMLLLLLSILFHHTES). A disordered region spans residues 48 to 73 (YKPNTAVETPPSRSRRGGGGQNTGAD). An SCOOP motif motif is present at residues 53 to 67 (AVETPPSRSRRGGGG). The short motif at 59–61 (SRS) is the SxS motif essential for MIK2 binding element. A compositionally biased stretch (gly residues) spans 64–73 (GGGGQNTGAD).

Belongs to the serine rich endogenous peptide (SCOOP) phytocytokine family. Interacts with MIK2 (via extracellular leucine-rich repeat domain); this interaction triggers the formation of complex between MIK2 and the BAK1/SERK3 and SERK4 coreceptors, and subsequent BAK1 activation by phosphorylation. As to expression, mostly expressed in leaves and flowers, and, to a lower extent, in seedlings shoots.

It is found in the cell membrane. It localises to the secreted. Its subcellular location is the extracellular space. The protein resides in the apoplast. In terms of biological role, brassicaceae-specific phytocytokine (plant endogenous peptide released into the apoplast) perceived by MIK2 in a BAK1/SERK3 and SERK4 coreceptors-dependent manner, that modulates various physiological and antimicrobial processes including growth prevention and reactive oxygen species (ROS) response regulation. This chain is Serine rich endogenous peptide 1, found in Arabidopsis thaliana (Mouse-ear cress).